Reading from the N-terminus, the 134-residue chain is Putative nickel-responsive regulator (134 aa).

Residues His-78, His-89, His-91, and Cys-97 each contribute to the Ni(2+) site.

It belongs to the transcriptional regulatory CopG/NikR family. Ni(2+) is required as a cofactor.

In terms of biological role, transcriptional regulator. In Chlorobium limicola (strain DSM 245 / NBRC 103803 / 6330), this protein is Putative nickel-responsive regulator.